A 120-amino-acid chain; its full sequence is Large ribosomal subunit protein eL18 (120 aa).

It belongs to the eukaryotic ribosomal protein eL18 family.

This is Large ribosomal subunit protein eL18 from Pyrococcus abyssi (strain GE5 / Orsay).